The chain runs to 358 residues: NADH-quinone oxidoreductase subunit H (358 aa).

Helical transmembrane passes span 29–49 (LIKIICVVLPLLGAVAYLTLW), 95–115 (GLFYLGPVMAIMPALGAWAVI), 130–150 (LLLVMAITSIEVYGVIIAGWA), 176–196 (FCFLVVIMVSGSMNLTEIVAV), 206–226 (GLGFLSWNWLPLFPIFIVYLI), 258–280 (GFAIFFLAEYASMWLVSILAVVM), 297–317 (GWIWLGIKTFLVVSMFIWIRA), and 334–354 (IFIPVTLVWLLVVGAWLLSPW).

Belongs to the complex I subunit 1 family. In terms of assembly, NDH-1 is composed of 14 different subunits. Subunits NuoA, H, J, K, L, M, N constitute the membrane sector of the complex.

The protein localises to the cell inner membrane. It carries out the reaction a quinone + NADH + 5 H(+)(in) = a quinol + NAD(+) + 4 H(+)(out). NDH-1 shuttles electrons from NADH, via FMN and iron-sulfur (Fe-S) centers, to quinones in the respiratory chain. The immediate electron acceptor for the enzyme in this species is believed to be ubiquinone. Couples the redox reaction to proton translocation (for every two electrons transferred, four hydrogen ions are translocated across the cytoplasmic membrane), and thus conserves the redox energy in a proton gradient. This subunit may bind ubiquinone. This chain is NADH-quinone oxidoreductase subunit H, found in Acidovorax sp. (strain JS42).